A 353-amino-acid chain; its full sequence is Putative transport protein aq_740 (353 aa).

The next 8 helical transmembrane spans lie at 4–24, 28–48, 60–80, 156–176, 209–229, 240–260, 268–288, and 309–329; these read LSLFVYLFFFLSFLFLFLYLL, FNPIVWAIVFGIVLYPLYGFI, FLVIFIVLVAIVIPFTIFAVI, VYTAGTSLFHVFVFLLTLFFI, VLAVIYGTVGTAVAQSIMGFI, LIWALITFFAAFVPPFGAAFV, LFTTKGIKEGLILLFFGTFLI, and VALFFSTIGGLIKFGFIGVFL.

Belongs to the autoinducer-2 exporter (AI-2E) (TC 2.A.86) family.

Its subcellular location is the cell membrane. The protein is Putative transport protein aq_740 of Aquifex aeolicus (strain VF5).